A 140-amino-acid chain; its full sequence is Ribosome-binding factor A (140 aa).

Positions 121–140 (KTEQTSADDDADRLDSEDRS) are disordered.

The protein belongs to the RbfA family. Monomer. Binds 30S ribosomal subunits, but not 50S ribosomal subunits or 70S ribosomes.

The protein localises to the cytoplasm. One of several proteins that assist in the late maturation steps of the functional core of the 30S ribosomal subunit. Associates with free 30S ribosomal subunits (but not with 30S subunits that are part of 70S ribosomes or polysomes). Required for efficient processing of 16S rRNA. May interact with the 5'-terminal helix region of 16S rRNA. The polypeptide is Ribosome-binding factor A (Psychrobacter sp. (strain PRwf-1)).